The following is a 129-amino-acid chain: uncharacterized protein (129 aa).

It belongs to the asfivirus C129R family.

The protein resides in the virion. Functionally, plays a role in the inhibition of type I interferon signaling pathway. Mechanistically, specifically interacts with 2',3'-cGAMP and cleaves it via its phosphodiesterase activity. In turn, prevents 2',3'-cGAMP interaction with host ER-resident STING1 leading to inhibition of downstream signaling pathway and type I interferon production. This is an uncharacterized protein from African swine fever virus (isolate Pig/Kenya/KEN-50/1950) (ASFV).